A 1209-amino-acid chain; its full sequence is Pre-mRNA-splicing factor rse1 (1209 aa).

Belongs to the RSE1 family. As to quaternary structure, associated with the spliceosome.

The protein localises to the nucleus. In terms of biological role, involved in pre-mRNA splicing and cell cycle control. The protein is Pre-mRNA-splicing factor rse1 (msp-5) of Neurospora crassa (strain ATCC 24698 / 74-OR23-1A / CBS 708.71 / DSM 1257 / FGSC 987).